A 477-amino-acid chain; its full sequence is Tyrosine-protein kinase transforming protein Fes (477 aa).

Residues 49–76 (GEPPPVLLLQDDRHSTSSSEQEREGGRT) are disordered. The span at 58 to 74 (QDDRHSTSSSEQEREGG) shows a compositional bias: basic and acidic residues. The region spanning 115 to 204 (WYHGALPRAE…KSGIVLNRAV (90 aa)) is the SH2 domain. The Protein kinase domain maps to 216 to 477 (LVLGEQIGRG…ELQSIRKRHR (262 aa)). Residues 222–230 (IGRGNFGEV) and K245 contribute to the ATP site. D338 functions as the Proton acceptor in the catalytic mechanism. A Phosphotyrosine; by autocatalysis modification is found at Y368.

Belongs to the protein kinase superfamily. Tyr protein kinase family. Fes/fps subfamily.

The enzyme catalyses L-tyrosyl-[protein] + ATP = O-phospho-L-tyrosyl-[protein] + ADP + H(+). This Feline sarcoma virus (strain Snyder-Theilen) protein is Tyrosine-protein kinase transforming protein Fes (V-FES).